The sequence spans 134 residues: Large ribosomal subunit protein uL16c (134 aa).

The protein belongs to the universal ribosomal protein uL16 family. Part of the 50S ribosomal subunit.

The protein localises to the plastid. It is found in the chloroplast. This is Large ribosomal subunit protein uL16c from Pinus koraiensis (Korean pine).